A 453-amino-acid chain; its full sequence is tRNA modification GTPase MnmE (453 aa).

(6S)-5-formyl-5,6,7,8-tetrahydrofolate is bound by residues Arg22, Glu79, and Lys119. The TrmE-type G domain occupies 215–376; the sequence is GMKVVIAGRP…LRNHLKECMG (162 aa). Residue Asn225 participates in K(+) binding. GTP-binding positions include 225-230, 244-250, 269-272, and 334-337; these read NAGKSS, TDIAGTT, DTAG, and NKAD. A Mg(2+)-binding site is contributed by Ser229. Positions 244, 246, and 249 each coordinate K(+). Thr250 serves as a coordination point for Mg(2+). A (6S)-5-formyl-5,6,7,8-tetrahydrofolate-binding site is contributed by Lys453.

It belongs to the TRAFAC class TrmE-Era-EngA-EngB-Septin-like GTPase superfamily. TrmE GTPase family. As to quaternary structure, homodimer. Heterotetramer of two MnmE and two MnmG subunits. Requires K(+) as cofactor.

It localises to the cytoplasm. In terms of biological role, exhibits a very high intrinsic GTPase hydrolysis rate. Involved in the addition of a carboxymethylaminomethyl (cmnm) group at the wobble position (U34) of certain tRNAs, forming tRNA-cmnm(5)s(2)U34. In Vibrio vulnificus (strain CMCP6), this protein is tRNA modification GTPase MnmE.